The chain runs to 145 residues: Ribosomal protein uL24-like (145 aa).

Disordered stretches follow at residues 1-21 (MKFNPFVTSDRSKNRKRHFNA) and 122-145 (KAKSRQVGKEKGKYKEELIEKMQE). Residues K136 and K142 each participate in a glycyl lysine isopeptide (Lys-Gly) (interchain with G-Cter in SUMO2) cross-link.

This sequence belongs to the universal ribosomal protein uL24 family.

The protein is Ribosomal protein uL24-like (RPL26L1) of Homo sapiens (Human).